Consider the following 465-residue polypeptide: Lysosomal dipeptide transporter MFSD1 (465 aa).

A disordered region spans residues 1-23 (MEEEDEEARALLAGGPDEADRGA). The short motif at 11-12 (LL) is the Dileucine internalization motif element. A run of 12 helical transmembrane segments spans residues 39-59 (LAHR…SYFC), 83-103 (LLYA…GFLI), 113-133 (TIIF…GGIF), 135-155 (AFWL…SLAV), 170-191 (LNLV…NMNL), 213-233 (ITLM…LALA), 266-286 (LWLI…FIGL), 303-323 (SAIN…FGLL), 331-351 (IIWV…LAFT), 361-381 (LLGL…AFVV), 392-412 (FMQS…GMIL), and 418-438 (LFLE…VVLL).

It belongs to the major facilitator superfamily. As to quaternary structure, homodimer. Interacts with lysosomal protein GLMP (via lumenal domain); the interaction starts while both proteins are still in the endoplasmic reticulum and is required for stabilization of MFSD1 in lysosomes but has no direct effect on its targeting to lysosomes or transporter activity.

The protein resides in the lysosome membrane. The catalysed reaction is L-alpha-aminoacyl-L-arginine(out) = L-alpha-aminoacyl-L-arginine(in). It catalyses the reaction L-arginyl-L-alpha-amino acid(out) = L-arginyl-L-alpha-amino acid(in). The enzyme catalyses L-arginyl-glycine(out) = L-arginyl-glycine(in). It carries out the reaction L-alpha-aminoacyl-L-lysine(out) = L-alpha-aminoacyl-L-lysine(in). The catalysed reaction is L-aspartyl-L-lysine(out) = L-aspartyl-L-lysine(in). It catalyses the reaction L-alanyl-L-lysine(out) = L-alanyl-L-lysine(in). The enzyme catalyses L-lysyl-L-alpha-amino acid(out) = L-lysyl-L-alpha-amino acid(in). It carries out the reaction L-lysyl-L-alanine(out) = L-lysyl-L-alanine(in). The catalysed reaction is L-lysyl-L-lysine(out) = L-lysyl-L-lysine(in). It catalyses the reaction L-lysyl-glycine(out) = L-lysyl-glycine(in). The enzyme catalyses L-alpha-aminoacyl-L-histidine(out) = L-alpha-aminoacyl-L-histidine(in). It carries out the reaction L-histidyl-L-alpha-amino acid(out) = L-histidyl-L-alpha-amino acid(in). The catalysed reaction is L-histidyl-glycine(out) = L-histidyl-glycine(in). Its function is as follows. Lysosomal dipeptide uniporter that selectively exports lysine, arginine or histidine-containing dipeptides with a net positive charge from the lysosome lumen into the cytosol. Could play a role in a specific type of protein O-glycosylation indirectly regulating macrophages migration and tissue invasion. Also essential for liver homeostasis. The chain is Lysosomal dipeptide transporter MFSD1 from Homo sapiens (Human).